A 170-amino-acid polypeptide reads, in one-letter code: Probable chemoreceptor glutamine deamidase CheD (170 aa).

The protein belongs to the CheD family.

The catalysed reaction is L-glutaminyl-[protein] + H2O = L-glutamyl-[protein] + NH4(+). Its function is as follows. Probably deamidates glutamine residues to glutamate on methyl-accepting chemotaxis receptors (MCPs), playing an important role in chemotaxis. The polypeptide is Probable chemoreceptor glutamine deamidase CheD (Maridesulfovibrio salexigens (strain ATCC 14822 / DSM 2638 / NCIMB 8403 / VKM B-1763) (Desulfovibrio salexigens)).